The chain runs to 591 residues: CTP synthase 1 (591 aa).

In terms of domain architecture, Glutamine amidotransferase type-1 spans 300–554; that stretch reads SIALVGKYTK…LAAAGRLQSY (255 aa). Active-site for GATase activity residues include Cys399, His526, and Glu528. 2 positions are modified to phosphoserine: Ser571 and Ser575.

It belongs to the CTP synthase family.

It catalyses the reaction UTP + L-glutamine + ATP + H2O = CTP + L-glutamate + ADP + phosphate + 2 H(+). It participates in pyrimidine metabolism; CTP biosynthesis via de novo pathway; CTP from UDP: step 2/2. This enzyme is involved in the de novo synthesis of CTP, a precursor of DNA, RNA and phospholipids. Catalyzes the ATP-dependent amination of UTP to CTP with either L-glutamine or ammonia as a source of nitrogen. The chain is CTP synthase 1 (ctps1) from Danio rerio (Zebrafish).